Consider the following 295-residue polypeptide: Phosphatidylglycerol--prolipoprotein diacylglyceryl transferase (295 aa).

Helical transmembrane passes span 28-48 (WYAL…VLAT), 69-89 (LLTW…VLFY), 101-121 (ILMV…VVIA), and 131-151 (IPKL…LLLG). Position 152 (arginine 152) interacts with a 1,2-diacyl-sn-glycero-3-phospho-(1'-sn-glycerol). The next 3 membrane-spanning stretches (helical) occupy residues 195-215 (QLYE…WLVW), 224-244 (GLIT…VEFF), and 268-288 (GLTM…WFVL).

The protein belongs to the Lgt family.

The protein resides in the cell inner membrane. It carries out the reaction L-cysteinyl-[prolipoprotein] + a 1,2-diacyl-sn-glycero-3-phospho-(1'-sn-glycerol) = an S-1,2-diacyl-sn-glyceryl-L-cysteinyl-[prolipoprotein] + sn-glycerol 1-phosphate + H(+). It participates in protein modification; lipoprotein biosynthesis (diacylglyceryl transfer). Its function is as follows. Catalyzes the transfer of the diacylglyceryl group from phosphatidylglycerol to the sulfhydryl group of the N-terminal cysteine of a prolipoprotein, the first step in the formation of mature lipoproteins. This Ruegeria pomeroyi (strain ATCC 700808 / DSM 15171 / DSS-3) (Silicibacter pomeroyi) protein is Phosphatidylglycerol--prolipoprotein diacylglyceryl transferase.